Reading from the N-terminus, the 501-residue chain is Glycosyltransferase family 92 protein F13G3.3 (501 aa).

A helical membrane pass occupies residues 10–30 (LSVVLLFSFLFFVTAVLLQFI). The 289-residue stretch at 151–439 (KPVVMCISPL…ISDCYKQSYY (289 aa)) folds into the GT92 domain.

This sequence belongs to the glycosyltransferase 92 family.

It is found in the membrane. The chain is Glycosyltransferase family 92 protein F13G3.3 from Caenorhabditis elegans.